Here is a 337-residue protein sequence, read N- to C-terminus: D-alanine--D-alanine ligase (337 aa).

Positions 124–330 (KMWFSALGIP…FTEYLSLVIN (207 aa)) constitute an ATP-grasp domain. Residue 154–209 (ALANWGSIFIKAASQGSSVGCYKVDDSSKVAQVLKDAFGYAPYVVVEKTIKARELE) coordinates ATP. Mg(2+) is bound by residues Asp-284, Glu-297, and Asn-299.

Belongs to the D-alanine--D-alanine ligase family. The cofactor is Mg(2+). Mn(2+) is required as a cofactor.

Its subcellular location is the cytoplasm. The catalysed reaction is 2 D-alanine + ATP = D-alanyl-D-alanine + ADP + phosphate + H(+). Its pathway is cell wall biogenesis; peptidoglycan biosynthesis. Cell wall formation. This is D-alanine--D-alanine ligase from Shewanella putrefaciens (strain CN-32 / ATCC BAA-453).